Here is a 488-residue protein sequence, read N- to C-terminus: Probable glycine dehydrogenase (decarboxylating) subunit 2 (488 aa).

N6-(pyridoxal phosphate)lysine is present on Lys273.

It belongs to the GcvP family. C-terminal subunit subfamily. As to quaternary structure, the glycine cleavage system is composed of four proteins: P, T, L and H. In this organism, the P 'protein' is a heterodimer of two subunits. Requires pyridoxal 5'-phosphate as cofactor.

It catalyses the reaction N(6)-[(R)-lipoyl]-L-lysyl-[glycine-cleavage complex H protein] + glycine + H(+) = N(6)-[(R)-S(8)-aminomethyldihydrolipoyl]-L-lysyl-[glycine-cleavage complex H protein] + CO2. The glycine cleavage system catalyzes the degradation of glycine. The P protein binds the alpha-amino group of glycine through its pyridoxal phosphate cofactor; CO(2) is released and the remaining methylamine moiety is then transferred to the lipoamide cofactor of the H protein. In Halalkalibacterium halodurans (strain ATCC BAA-125 / DSM 18197 / FERM 7344 / JCM 9153 / C-125) (Bacillus halodurans), this protein is Probable glycine dehydrogenase (decarboxylating) subunit 2.